A 195-amino-acid chain; its full sequence is MSSCSNVCGSRQAQAAAEGGYQRYGVRSYLHQFYEDCTASIWEYEDDFQIQRSPNRWSSVFWKVGLISGTVFVILGLTVLAVGFLVPPKIEAFGEADFVVVDTHAVQFNSALDMYKLAGAVLFCIGGTSMAGCLLMSVFVKSYSKEEKFLQQKFKERIADIKAHTQPVTKAPGPGETKIPVTLSRVQNVQPLLAT.

The next 2 helical transmembrane spans lie at 66–86 and 120–140; these read LISGTVFVILGLTVLAVGFLV and AVLFCIGGTSMAGCLLMSVFV.

The protein belongs to the VMP family. In terms of tissue distribution, expressed in brain. Not detectable in other tissues tested.

It is found in the membrane. The protein resides in the cell projection. Its subcellular location is the neuron projection. In terms of biological role, may play an important role in neural organelle transport, and in transduction of nerve signals or in nerve growth. May play a role in neurite extension. May play a role in memory consolidation. The sequence is that of Neurensin-1 from Homo sapiens (Human).